The sequence spans 457 residues: tRNA modification GTPase MnmE (457 aa).

Arg25, Glu87, and Arg126 together coordinate (6S)-5-formyl-5,6,7,8-tetrahydrofolate. Positions 223–377 (GISTAIIGRP…IEERINNLFF (155 aa)) constitute a TrmE-type G domain. Position 233 (Asn233) interacts with K(+). GTP contacts are provided by residues 233-238 (NVGKSS), 252-258 (TDIAGTT), and 277-280 (DTAG). Ser237 contacts Mg(2+). Residues Thr252, Ile254, and Thr257 each contribute to the K(+) site. Thr258 contributes to the Mg(2+) binding site. Residue Lys457 participates in (6S)-5-formyl-5,6,7,8-tetrahydrofolate binding.

This sequence belongs to the TRAFAC class TrmE-Era-EngA-EngB-Septin-like GTPase superfamily. TrmE GTPase family. As to quaternary structure, homodimer. Heterotetramer of two MnmE and two MnmG subunits. K(+) serves as cofactor.

It is found in the cytoplasm. Exhibits a very high intrinsic GTPase hydrolysis rate. Involved in the addition of a carboxymethylaminomethyl (cmnm) group at the wobble position (U34) of certain tRNAs, forming tRNA-cmnm(5)s(2)U34. The chain is tRNA modification GTPase MnmE from Streptococcus pneumoniae (strain Hungary19A-6).